The following is a 178-amino-acid chain: Ribosomal RNA small subunit methyltransferase G (178 aa).

S-adenosyl-L-methionine contacts are provided by residues Gly-54, Leu-59, 105-106 (LE), and Arg-120.

This sequence belongs to the methyltransferase superfamily. RNA methyltransferase RsmG family.

It localises to the cytoplasm. It catalyses the reaction guanosine(527) in 16S rRNA + S-adenosyl-L-methionine = N(7)-methylguanosine(527) in 16S rRNA + S-adenosyl-L-homocysteine. Functionally, specifically methylates the N7 position of guanine in position 527 of 16S rRNA. In Helicobacter pylori (strain ATCC 700392 / 26695) (Campylobacter pylori), this protein is Ribosomal RNA small subunit methyltransferase G.